The primary structure comprises 261 residues: Thiazole synthase (261 aa).

Residue Lys-101 is the Schiff-base intermediate with DXP of the active site. Residues Gly-162, 188–189 (AG), and 210–211 (NT) each bind 1-deoxy-D-xylulose 5-phosphate.

The protein belongs to the ThiG family. In terms of assembly, homotetramer. Forms heterodimers with either ThiH or ThiS.

The protein resides in the cytoplasm. It catalyses the reaction [ThiS sulfur-carrier protein]-C-terminal-Gly-aminoethanethioate + 2-iminoacetate + 1-deoxy-D-xylulose 5-phosphate = [ThiS sulfur-carrier protein]-C-terminal Gly-Gly + 2-[(2R,5Z)-2-carboxy-4-methylthiazol-5(2H)-ylidene]ethyl phosphate + 2 H2O + H(+). The protein operates within cofactor biosynthesis; thiamine diphosphate biosynthesis. In terms of biological role, catalyzes the rearrangement of 1-deoxy-D-xylulose 5-phosphate (DXP) to produce the thiazole phosphate moiety of thiamine. Sulfur is provided by the thiocarboxylate moiety of the carrier protein ThiS. In vitro, sulfur can be provided by H(2)S. This is Thiazole synthase from Azoarcus sp. (strain BH72).